Reading from the N-terminus, the 315-residue chain is 3-oxoacyl-[acyl-carrier-protein] reductase 3, chloroplastic (315 aa).

A chloroplast-targeting transit peptide spans 1–55 (MATTVAATKLTSLKAVKKLGFREIRQVRQWTPLQSSMPHFGSRQSFATSTVVKAQ). 77–101 (VTGASRGIGKAIALSLGKAGCKVLV) is a binding site for NADP(+). Substrate is bound at residue Ser-209. Tyr-222 serves as the catalytic Proton acceptor.

Belongs to the short-chain dehydrogenases/reductases (SDR) family. As to quaternary structure, homotetramer.

The protein resides in the plastid. The protein localises to the chloroplast. The enzyme catalyses a (3R)-hydroxyacyl-[ACP] + NADP(+) = a 3-oxoacyl-[ACP] + NADPH + H(+). The protein operates within lipid metabolism; fatty acid biosynthesis. This chain is 3-oxoacyl-[acyl-carrier-protein] reductase 3, chloroplastic (bkr3), found in Brassica napus (Rape).